Consider the following 105-residue polypeptide: Replication restart protein PriB (105 aa).

Positions methionine 1–aspartate 102 constitute an SSB domain.

Belongs to the PriB family. Homodimer. Interacts with PriA and DnaT. Component of the replication restart primosome. Primosome assembly occurs via a 'hand-off' mechanism. PriA binds to replication forks, subsequently PriB then DnaT bind; DnaT then displaces ssDNA to generate the helicase loading substrate.

Its function is as follows. Involved in the restart of stalled replication forks, which reloads the replicative helicase on sites other than the origin of replication; the PriA-PriB pathway is the major replication restart pathway. During primosome assembly it facilitates complex formation between PriA and DnaT on DNA; stabilizes PriA on DNA. Stimulates the DNA unwinding activity of PriA helicase. This is Replication restart protein PriB from Serratia proteamaculans (strain 568).